We begin with the raw amino-acid sequence, 79 residues long: CDC42 small effector protein 1-B (79 aa).

2 S-palmitoyl cysteine lipidation sites follow: cysteine 10 and cysteine 11. The region spanning 30 to 43 is the CRIB domain; it reads IGEPMNFVHLTHIG. The tract at residues 41–79 is disordered; that stretch reads HIGSGDMGASDGLPKAGTVQEQMRSKCGRDRQWSNSRVL. Residues 63-72 are compositionally biased toward basic and acidic residues; that stretch reads MRSKCGRDRQ.

This sequence belongs to the CDC42SE/SPEC family.

The protein resides in the cytoplasm. Its subcellular location is the cytoskeleton. It is found in the cell membrane. Probably involved in the organization of the actin cytoskeleton by acting downstream of CDC42, inducing actin filament assembly. In Xenopus laevis (African clawed frog), this protein is CDC42 small effector protein 1-B (cdc42se1-b).